A 203-amino-acid chain; its full sequence is Recombination protein RecR (203 aa).

The C4-type zinc finger occupies 57 to 73; sequence CQSCGTLKSNSLGCNNC. The 95-residue stretch at 81–175 folds into the Toprim domain; it reads NKICVVEDIA…KVTKLAQGLP (95 aa).

It belongs to the RecR family.

May play a role in DNA repair. It seems to be involved in an RecBC-independent recombinational process of DNA repair. It may act with RecF and RecO. This chain is Recombination protein RecR, found in Pelagibacter ubique (strain HTCC1062).